The sequence spans 449 residues: Ribosomal protein uS12 methylthiotransferase RimO (449 aa).

Positions 15-125 (PRISFVSLGC…VLAAVHEAVP (111 aa)) constitute an MTTase N-terminal domain. Positions 24, 60, 89, 156, 160, and 163 each coordinate [4Fe-4S] cluster. The Radical SAM core domain maps to 142 to 379 (LTPRHYAYLK…MRTQQKVSAR (238 aa)). The TRAM domain maps to 382 to 448 (KRKVGTRQSV…PYDLSGTAVG (67 aa)).

It belongs to the methylthiotransferase family. RimO subfamily. Requires [4Fe-4S] cluster as cofactor.

It is found in the cytoplasm. The enzyme catalyses L-aspartate(89)-[ribosomal protein uS12]-hydrogen + (sulfur carrier)-SH + AH2 + 2 S-adenosyl-L-methionine = 3-methylsulfanyl-L-aspartate(89)-[ribosomal protein uS12]-hydrogen + (sulfur carrier)-H + 5'-deoxyadenosine + L-methionine + A + S-adenosyl-L-homocysteine + 2 H(+). Functionally, catalyzes the methylthiolation of an aspartic acid residue of ribosomal protein uS12. This chain is Ribosomal protein uS12 methylthiotransferase RimO, found in Xanthobacter autotrophicus (strain ATCC BAA-1158 / Py2).